Reading from the N-terminus, the 360-residue chain is Heme A synthase (360 aa).

A run of 8 helical transmembrane segments spans residues 29–49 (WLFL…ATRL), 111–131 (FLGR…WWTG), 139–159 (LGLV…WIMV), 175–195 (LAAH…LAAG), 210–230 (LTAL…GLVA), 269–289 (VALV…LALL), 309–329 (ALAG…LLAV), and 330–350 (PLWA…MAVA). Histidine 276 serves as a coordination point for heme. Residue histidine 337 participates in heme binding.

It belongs to the COX15/CtaA family. Type 2 subfamily. Interacts with CtaB. Heme b is required as a cofactor.

The protein resides in the cell membrane. The enzyme catalyses Fe(II)-heme o + 2 A + H2O = Fe(II)-heme a + 2 AH2. The protein operates within porphyrin-containing compound metabolism; heme A biosynthesis; heme A from heme O: step 1/1. Its function is as follows. Catalyzes the conversion of heme O to heme A by two successive hydroxylations of the methyl group at C8. The first hydroxylation forms heme I, the second hydroxylation results in an unstable dihydroxymethyl group, which spontaneously dehydrates, resulting in the formyl group of heme A. The sequence is that of Heme A synthase from Methylobacterium sp. (strain 4-46).